The following is a 198-amino-acid chain: MKQPSALSSLVEALRALPGVGPKSAQRIAYHLMQHDREGAERLGRSLLFATEHLQHCEKCNTFTEAQICEVCSDDERDPTLLCVVETPADQIMLEQTMTYRGLYFVLMGRLSPLDGIGPKEIHFDRLVRRASDGVVKEVVLATNFTNEGEATAHYLGQTLKARGLAVTRLARGVPVGGELEYVDAGTIARAMLDRRTM.

The C4-type zinc-finger motif lies at 57 to 72 (CEKCNTFTEAQICEVC). Residues 80-175 (TLLCVVETPA…AVTRLARGVP (96 aa)) form the Toprim domain.

It belongs to the RecR family.

May play a role in DNA repair. It seems to be involved in an RecBC-independent recombinational process of DNA repair. It may act with RecF and RecO. The chain is Recombination protein RecR from Burkholderia vietnamiensis (strain G4 / LMG 22486) (Burkholderia cepacia (strain R1808)).